The chain runs to 136 residues: ATP synthase epsilon chain (136 aa).

A disordered region spans residues Asp95–Gln115. Residues Ser101–Gln115 are compositionally biased toward basic and acidic residues.

This sequence belongs to the ATPase epsilon chain family. In terms of assembly, F-type ATPases have 2 components, CF(1) - the catalytic core - and CF(0) - the membrane proton channel. CF(1) has five subunits: alpha(3), beta(3), gamma(1), delta(1), epsilon(1). CF(0) has three main subunits: a, b and c.

The protein localises to the cellular thylakoid membrane. Produces ATP from ADP in the presence of a proton gradient across the membrane. This Rippkaea orientalis (strain PCC 8801 / RF-1) (Cyanothece sp. (strain PCC 8801)) protein is ATP synthase epsilon chain.